A 503-amino-acid chain; its full sequence is Maturase K (503 aa).

Belongs to the intron maturase 2 family. MatK subfamily.

It localises to the plastid. The protein resides in the chloroplast. Functionally, usually encoded in the trnK tRNA gene intron. Probably assists in splicing its own and other chloroplast group II introns. This chain is Maturase K, found in Stangeria eriopus (Natal grass cycad).